Consider the following 359-residue polypeptide: Alkanal monooxygenase alpha chain (359 aa).

Belongs to the bacterial luciferase oxidoreductase family. As to quaternary structure, heterodimer of an alpha and a beta chain.

The enzyme catalyses a long-chain fatty aldehyde + FMNH2 + O2 = a long-chain fatty acid + hnu + FMN + H2O + 2 H(+). Light-emitting reaction in luminous bacteria. This chain is Alkanal monooxygenase alpha chain (luxA), found in Photorhabdus laumondii subsp. laumondii (strain DSM 15139 / CIP 105565 / TT01) (Photorhabdus luminescens subsp. laumondii).